Consider the following 124-residue polypeptide: Transcription initiation factor TFIID subunit 13 (124 aa).

The segment covering 1 to 16 (MADEEEDPTFEEENEE) has biased composition (acidic residues). Residues 1–28 (MADEEEDPTFEEENEEIGGGAEGGQGKR) are disordered. The 43-residue stretch at 32 to 74 (FSKELRCMMYGFGDDQNPYTESVDILEDLVIEFITEMTHKAMS) folds into the Histone-fold domain.

It belongs to the TAF13 family. Component of the TFIID basal transcription factor complex, composed of TATA-box-binding protein TBP, and a number of TBP-associated factors (TAFs), including TAF1, TAF2, TAF3, TAF4, TAF5, TAF6, TAF7, TAF8, TAF9, TAF10, TAF11, TAF12 and TAF13. Interacts with TBP, and more strongly with TAF10 and TAF11.

It localises to the nucleus. Functionally, the TFIID basal transcription factor complex plays a major role in the initiation of RNA polymerase II (Pol II)-dependent transcription. TFIID recognizes and binds promoters via its subunit TBP, a TATA-box-binding protein, and promotes assembly of the pre-initiation complex (PIC). The TFIID complex consists of TBP and TBP-associated factors (TAFs), including TAF1, TAF2, TAF3, TAF4, TAF5, TAF6, TAF7, TAF8, TAF9, TAF10, TAF11, TAF12 and TAF13. TAF13, together with TAF11 and TBP, play key roles during promoter binding by the TFIID and TFIIA transcription factor complexes. This chain is Transcription initiation factor TFIID subunit 13, found in Bos taurus (Bovine).